The chain runs to 95 residues: Putative defensin-like protein 252 (95 aa).

An N-terminal signal peptide occupies residues 1-27 (MRCVTSFVVLCILMFLVVNNVKVDVKA). Cystine bridges form between C34/C93, C45/C72, C56/C85, and C70/C87.

This sequence belongs to the DEFL family.

Its subcellular location is the secreted. The chain is Putative defensin-like protein 252 (SCRL13) from Arabidopsis thaliana (Mouse-ear cress).